A 324-amino-acid chain; its full sequence is Mitochondrial thiamine pyrophosphate carrier 1 (324 aa).

3 Solcar repeats span residues 12–110 (GNRI…ISSA), 119–205 (PQPV…LRSP), and 212–307 (PFGT…VLGL). A run of 6 helical transmembrane segments spans residues 15–35 (IQVV…VAPL), 79–99 (ITGL…YGGI), 125–145 (FISG…LDLL), 182–202 (TAAI…YEAL), 218–238 (AGAG…LDLV), and 282–299 (GLTV…VTMW).

The protein belongs to the mitochondrial carrier (TC 2.A.29) family.

The protein localises to the mitochondrion inner membrane. In terms of biological role, mitochondrial transporter that mediates uptake of thiamine pyrophosphate (ThPP) into mitochondria. This is Mitochondrial thiamine pyrophosphate carrier 1 (TPC1) from Ajellomyces capsulatus (strain NAm1 / WU24) (Darling's disease fungus).